The following is a 104-amino-acid chain: Large ribosomal subunit protein uL24 (104 aa).

It belongs to the universal ribosomal protein uL24 family. Part of the 50S ribosomal subunit.

Functionally, one of two assembly initiator proteins, it binds directly to the 5'-end of the 23S rRNA, where it nucleates assembly of the 50S subunit. Its function is as follows. One of the proteins that surrounds the polypeptide exit tunnel on the outside of the subunit. The protein is Large ribosomal subunit protein uL24 of Caulobacter vibrioides (strain ATCC 19089 / CIP 103742 / CB 15) (Caulobacter crescentus).